The following is a 133-amino-acid chain: MITDPIADYLTRIRNAIRARHRIVEIPASNLKKAMTELLHEKGYIKQYKFDDQPNKQGSIKIGLKYNPGTKTSPINKLERVSKPGLRKYVKASELPSVLNGLGIAILSTSKGIMSDKEARQMKLGGEVLCYIY.

The protein belongs to the universal ribosomal protein uS8 family. In terms of assembly, part of the 30S ribosomal subunit. Contacts proteins S5 and S12.

One of the primary rRNA binding proteins, it binds directly to 16S rRNA central domain where it helps coordinate assembly of the platform of the 30S subunit. The sequence is that of Small ribosomal subunit protein uS8 from Amoebophilus asiaticus (strain 5a2).